We begin with the raw amino-acid sequence, 104 residues long: Flagellar hook-basal body complex protein FliE (104 aa).

Belongs to the FliE family.

It localises to the bacterial flagellum basal body. The protein is Flagellar hook-basal body complex protein FliE of Enterobacter sp. (strain 638).